The chain runs to 131 residues: Conotoxin Cal8.1 (131 aa).

Positions 1-19 (MKLLLTLLLGSALMCITLA) are cleaved as a signal peptide. The propeptide occupies 20–38 (DECGLGTHRPVKEVIDNVR).

Post-translationally, contains 4 disulfide bonds. In terms of tissue distribution, expressed by the venom duct.

It is found in the secreted. In terms of biological role, probable neurotoxin with unknown target. Possibly targets ion channels. This Californiconus californicus (California cone) protein is Conotoxin Cal8.1.